Reading from the N-terminus, the 719-residue chain is Alpha-galactosidase 2 (719 aa).

Asp-472 acts as the Nucleophile in catalysis. Asp-542 functions as the Proton donor in the catalytic mechanism.

Belongs to the glycosyl hydrolase 36 family.

The enzyme catalyses Hydrolysis of terminal, non-reducing alpha-D-galactose residues in alpha-D-galactosides, including galactose oligosaccharides, galactomannans and galactolipids.. Its function is as follows. Alpha-galactosidase associated with the sucrase operon. This is Alpha-galactosidase 2 (agaS) from Pediococcus pentosaceus.